The sequence spans 99 residues: Bublin coiled-coil protein (99 aa).

The stretch at 34-71 forms a coiled coil; the sequence is LDQINSCLDDIEERNDALNGKLQELLESNRAARRDFRQ. Residues 66 to 78 are compositionally biased toward basic and acidic residues; it reads RRDFRQQITDHAD. Residues 66 to 99 are disordered; sequence RRDFRQQITDHADLPPPANDDDEDEQSRDAQKKD.

The protein belongs to the UPF0184 (EST00098) family.

It is found in the cell junction. It localises to the cytoplasm. The protein resides in the cytoskeleton. Functionally, essential for intermediate filament organization in intestinal cells, interacts with intermediate filament and regulates intestinal lumen morphology. This is Bublin coiled-coil protein (bbln) from Danio rerio (Zebrafish).